Here is a 461-residue protein sequence, read N- to C-terminus: MVRLAAELLLLLGLLLLTLHITVLRSSPLQHGNDTVSLEQDSRVAENNVNADSSSSVQLGPGDRQTRVAHIPASQPWAQSPGTGGSLQRDGPGAFLLDLQNFPDLSKADINGQNPNIQVTIEVVDSLEGSEPEKGMRKENKPGWAAPNWRNWWQRSSSSSSSSVSTPKGPEEQDYPYESNTEDSNFLKPLGDWERRVKSEAGAGSRTQTEYDYIDGEGDWSAWSPCSVSCGNGNQKRTRSCGYACTATESRTCDMPSCPGIEDAFKTAATEVSLLAGTEEFNATELFGVDTDSCERWMNCKSEFLKKYMSKVATDLPSCPCFYPTEVAYSTADVHDANTKRNFRWKDASGPKEKLEIYKPTARYCIRSMLTLESTTLAAQHCCYDDSMKLITRGKGAGTPNLISTEFSADLHYKVDILPWIICKGDWSRYNHARPPNNGQKCAENPQDEDYYKQFEEAREF.

An N-terminal signal peptide occupies residues 1–26 (MVRLAAELLLLLGLLLLTLHITVLRS). A glycan (N-linked (GlcNAc...) asparagine) is linked at Asn-33. Residues 40-58 (QDSRVAENNVNADSSSSVQ) are compositionally biased toward polar residues. Disordered stretches follow at residues 40 to 62 (QDSRVAENNVNADSSSSVQLGPG), 73 to 92 (ASQPWAQSPGTGGSLQRDGP), and 128 to 188 (EGSE…NFLK). Residues 131–141 (EPEKGMRKENK) show a composition bias toward basic and acidic residues. The segment covering 156–165 (SSSSSSSSVS) has biased composition (low complexity). A TSP type-1 domain is found at 215-259 (DGEGDWSAWSPCSVSCGNGNQKRTRSCGYACTATESRTCDMPSCP). 3 disulfide bridges follow: Cys-226–Cys-253, Cys-230–Cys-258, and Cys-241–Cys-245. N-linked (GlcNAc...) asparagine glycosylation occurs at Asn-282. The 164-residue stretch at 286–449 (LFGVDTDSCE…QKCAENPQDE (164 aa)) folds into the AMOP domain.

Belongs to the isthmin family.

The protein resides in the secreted. Its function is as follows. May specifically influence certain angiogenesis process. This chain is Isthmin-1 (ism1), found in Danio rerio (Zebrafish).